A 315-amino-acid chain; its full sequence is ADP-L-glycero-D-manno-heptose-6-epimerase (315 aa).

NADP(+)-binding positions include 10–11 (FI), 31–32 (DD), Lys-38, Lys-53, 76–80 (QGACS), and Asn-93. The active-site Proton acceptor is the Tyr-140. Lys-144 contributes to the NADP(+) binding site. Asn-169 contacts substrate. NADP(+) contacts are provided by Val-170 and Lys-178. The active-site Proton acceptor is Lys-178. Residues Ser-180, His-187, 201 to 204 (FEGC), Arg-214, and Tyr-278 each bind substrate.

Belongs to the NAD(P)-dependent epimerase/dehydratase family. HldD subfamily. As to quaternary structure, homopentamer. The cofactor is NADP(+).

It carries out the reaction ADP-D-glycero-beta-D-manno-heptose = ADP-L-glycero-beta-D-manno-heptose. The protein operates within nucleotide-sugar biosynthesis; ADP-L-glycero-beta-D-manno-heptose biosynthesis; ADP-L-glycero-beta-D-manno-heptose from D-glycero-beta-D-manno-heptose 7-phosphate: step 4/4. Its function is as follows. Catalyzes the interconversion between ADP-D-glycero-beta-D-manno-heptose and ADP-L-glycero-beta-D-manno-heptose via an epimerization at carbon 6 of the heptose. This Syntrophotalea carbinolica (strain DSM 2380 / NBRC 103641 / GraBd1) (Pelobacter carbinolicus) protein is ADP-L-glycero-D-manno-heptose-6-epimerase.